We begin with the raw amino-acid sequence, 524 residues long: Bifunctional purine biosynthesis protein PurH (524 aa).

The MGS-like domain maps to 1–149 (MSDPLIKRAL…KNNESVTVLT (149 aa)).

The protein belongs to the PurH family.

It carries out the reaction (6R)-10-formyltetrahydrofolate + 5-amino-1-(5-phospho-beta-D-ribosyl)imidazole-4-carboxamide = 5-formamido-1-(5-phospho-D-ribosyl)imidazole-4-carboxamide + (6S)-5,6,7,8-tetrahydrofolate. It catalyses the reaction IMP + H2O = 5-formamido-1-(5-phospho-D-ribosyl)imidazole-4-carboxamide. The protein operates within purine metabolism; IMP biosynthesis via de novo pathway; 5-formamido-1-(5-phospho-D-ribosyl)imidazole-4-carboxamide from 5-amino-1-(5-phospho-D-ribosyl)imidazole-4-carboxamide (10-formyl THF route): step 1/1. Its pathway is purine metabolism; IMP biosynthesis via de novo pathway; IMP from 5-formamido-1-(5-phospho-D-ribosyl)imidazole-4-carboxamide: step 1/1. This is Bifunctional purine biosynthesis protein PurH from Chlorobium phaeovibrioides (strain DSM 265 / 1930) (Prosthecochloris vibrioformis (strain DSM 265)).